A 376-amino-acid chain; its full sequence is tRNA(Met) cytidine acetate ligase (376 aa).

ATP contacts are provided by residues 7–20 (IAEYNPFHNGHYYQ), glycine 102, asparagine 160, and arginine 181.

It belongs to the TmcAL family.

Its subcellular location is the cytoplasm. It catalyses the reaction cytidine(34) in elongator tRNA(Met) + acetate + ATP = N(4)-acetylcytidine(34) in elongator tRNA(Met) + AMP + diphosphate. Its function is as follows. Catalyzes the formation of N(4)-acetylcytidine (ac(4)C) at the wobble position of elongator tRNA(Met), using acetate and ATP as substrates. First activates an acetate ion to form acetyladenylate (Ac-AMP) and then transfers the acetyl group to tRNA to form ac(4)C34. The chain is tRNA(Met) cytidine acetate ligase from Exiguobacterium sp. (strain ATCC BAA-1283 / AT1b).